Consider the following 234-residue polypeptide: Lipoprotein-releasing system ATP-binding protein LolD 1 (234 aa).

The region spanning 5–231 (IEARGIEKVF…RLTSNVRDPG (227 aa)) is the ABC transporter domain. An ATP-binding site is contributed by 41-48 (GASGSGKS).

Belongs to the ABC transporter superfamily. Lipoprotein translocase (TC 3.A.1.125) family. The complex is composed of two ATP-binding proteins (LolD) and two transmembrane proteins (LolC and LolE).

The protein resides in the cell inner membrane. Its function is as follows. Part of the ABC transporter complex LolCDE involved in the translocation of mature outer membrane-directed lipoproteins, from the inner membrane to the periplasmic chaperone, LolA. Responsible for the formation of the LolA-lipoprotein complex in an ATP-dependent manner. The polypeptide is Lipoprotein-releasing system ATP-binding protein LolD 1 (Caulobacter vibrioides (strain ATCC 19089 / CIP 103742 / CB 15) (Caulobacter crescentus)).